We begin with the raw amino-acid sequence, 296 residues long: Protoheme IX farnesyltransferase (296 aa).

At 1-9 the chain is on the cytoplasmic side; the sequence is MMFKQYLQV. A helical membrane pass occupies residues 10-28; that stretch reads TKPGIIFGNLISVIGGFLL. Over 29 to 37 the chain is Periplasmic; that stretch reads ASKGSIDYP. The chain crosses the membrane as a helical span at residues 38–56; the sequence is LFIYTLVGVSLVVASGCVF. At 57–78 the chain is on the cytoplasmic side; it reads NNYIDRDIDRKMERTKNRVLVK. The helical transmembrane segment at 79–97 threads the bilayer; sequence GLISPAVSLVYATLLGIAG. Topologically, residues 98 to 107 are periplasmic; that stretch reads FMLLWFGANP. The helical transmembrane segment at 108-126 threads the bilayer; that stretch reads LACWLGVMGFVVYVGVYSL. Residues 127-197 are Cytoplasmic-facing; that stretch reads YMKRHSVYGT…YQAANIPVLP (71 aa). A helical membrane pass occupies residues 198-216; it reads VVKGISVAKNHITLYIIAF. Over 217–228 the chain is Periplasmic; the sequence is AVATLMLSLGGY. The chain crosses the membrane as a helical span at residues 229-247; the sequence is AGYKYLVVAAAVSVWWLGM. Residues 248–268 are Cytoplasmic-facing; the sequence is ALRGYKVADDRIWARKLFGFS. A helical transmembrane segment spans residues 269–287; that stretch reads IIAITALSVMMSVDFMVPD. Over 288–296 the chain is Periplasmic; it reads SHTLLAAVW.

It belongs to the UbiA prenyltransferase family. Protoheme IX farnesyltransferase subfamily.

The protein localises to the cell inner membrane. It carries out the reaction heme b + (2E,6E)-farnesyl diphosphate + H2O = Fe(II)-heme o + diphosphate. Its pathway is porphyrin-containing compound metabolism; heme O biosynthesis; heme O from protoheme: step 1/1. Its function is as follows. Converts heme B (protoheme IX) to heme O by substitution of the vinyl group on carbon 2 of heme B porphyrin ring with a hydroxyethyl farnesyl side group. The polypeptide is Protoheme IX farnesyltransferase (Escherichia coli O139:H28 (strain E24377A / ETEC)).